A 207-amino-acid polypeptide reads, in one-letter code: Putative 3-methyladenine DNA glycosylase (207 aa).

The protein belongs to the DNA glycosylase MPG family.

This chain is Putative 3-methyladenine DNA glycosylase, found in Listeria welshimeri serovar 6b (strain ATCC 35897 / DSM 20650 / CCUG 15529 / CIP 8149 / NCTC 11857 / SLCC 5334 / V8).